We begin with the raw amino-acid sequence, 149 residues long: Arginine repressor (149 aa).

It belongs to the ArgR family.

The protein resides in the cytoplasm. The protein operates within amino-acid biosynthesis; L-arginine biosynthesis [regulation]. Its function is as follows. Regulates arginine biosynthesis genes. This is Arginine repressor from Listeria innocua serovar 6a (strain ATCC BAA-680 / CLIP 11262).